Reading from the N-terminus, the 447-residue chain is C4-dicarboxylate transport protein (447 aa).

9 helical membrane passes run 13 to 33 (SLYF…HYWP), 49 to 69 (LIKM…IAGM), 81 to 101 (LALL…LLIV), 149 to 169 (AFAK…GFAL), 189 to 209 (VLFA…FGAM), 227 to 247 (LMGT…GLIA), 302 to 322 (GYSF…VFIA), 336 to 356 (TLLA…GSGF), and 357 to 377 (IVLA…LALI). The tract at residues 422 to 447 (ETEAEANEPEAVLDEIDQHMPVPAAR) is disordered. Positions 425-436 (AEANEPEAVLDE) are enriched in acidic residues.

The protein belongs to the dicarboxylate/amino acid:cation symporter (DAACS) (TC 2.A.23) family.

Its subcellular location is the cell inner membrane. In terms of biological role, responsible for the transport of dicarboxylates such as succinate, fumarate, and malate from the periplasm across the membrane. In Leptothrix cholodnii (strain ATCC 51168 / LMG 8142 / SP-6) (Leptothrix discophora (strain SP-6)), this protein is C4-dicarboxylate transport protein.